A 430-amino-acid polypeptide reads, in one-letter code: Adenylosuccinate synthetase (430 aa).

GTP contacts are provided by residues 12 to 18 and 40 to 42; these read GDEGKGK and GHT. The active-site Proton acceptor is D13. Residues D13 and G40 each contribute to the Mg(2+) site. IMP is bound by residues 13–16, 38–41, T128, R142, Q223, T238, and R302; these read DEGK and NAGH. H41 functions as the Proton donor in the catalytic mechanism. 298 to 304 provides a ligand contact to substrate; the sequence is TTTGRPR. Residues R304, 330-332, and 412-414 contribute to the GTP site; these read SID and SVG.

The protein belongs to the adenylosuccinate synthetase family. In terms of assembly, homodimer. It depends on Mg(2+) as a cofactor.

Its subcellular location is the cytoplasm. It catalyses the reaction IMP + L-aspartate + GTP = N(6)-(1,2-dicarboxyethyl)-AMP + GDP + phosphate + 2 H(+). It functions in the pathway purine metabolism; AMP biosynthesis via de novo pathway; AMP from IMP: step 1/2. In terms of biological role, plays an important role in the de novo pathway of purine nucleotide biosynthesis. Catalyzes the first committed step in the biosynthesis of AMP from IMP. This chain is Adenylosuccinate synthetase, found in Streptococcus equi subsp. equi (strain 4047).